We begin with the raw amino-acid sequence, 328 residues long: Tetraacyldisaccharide 4'-kinase (328 aa).

55 to 62 (TAGGNGKT) contacts ATP.

The protein belongs to the LpxK family.

The enzyme catalyses a lipid A disaccharide + ATP = a lipid IVA + ADP + H(+). It participates in glycolipid biosynthesis; lipid IV(A) biosynthesis; lipid IV(A) from (3R)-3-hydroxytetradecanoyl-[acyl-carrier-protein] and UDP-N-acetyl-alpha-D-glucosamine: step 6/6. Its function is as follows. Transfers the gamma-phosphate of ATP to the 4'-position of a tetraacyldisaccharide 1-phosphate intermediate (termed DS-1-P) to form tetraacyldisaccharide 1,4'-bis-phosphate (lipid IVA). This chain is Tetraacyldisaccharide 4'-kinase, found in Escherichia coli (strain K12 / MC4100 / BW2952).